Reading from the N-terminus, the 456-residue chain is Bifunctional protein GlmU (456 aa).

Positions 1 to 229 are pyrophosphorylase; sequence MLNSAMSVVI…ISETDGVNNR (229 aa). Residues 11–14, lysine 25, glutamine 76, 81–82, 103–105, glycine 140, glutamate 154, asparagine 169, and asparagine 227 each bind UDP-N-acetyl-alpha-D-glucosamine; these read LAAG, GT, and YGD. Aspartate 105 is a binding site for Mg(2+). Residue asparagine 227 participates in Mg(2+) binding. Residues 230–250 form a linker region; that stretch reads LQLSRLERIYQAEQAEKLLLS. Residues 251 to 456 are N-acetyltransferase; the sequence is GVMLRDPARF…QGWQRPVKKK (206 aa). 2 residues coordinate UDP-N-acetyl-alpha-D-glucosamine: arginine 333 and lysine 351. Histidine 363 acts as the Proton acceptor in catalysis. Positions 366 and 377 each coordinate UDP-N-acetyl-alpha-D-glucosamine. Acetyl-CoA is bound by residues alanine 380, 386–387, serine 405, alanine 423, and arginine 440; that span reads NY.

It in the N-terminal section; belongs to the N-acetylglucosamine-1-phosphate uridyltransferase family. This sequence in the C-terminal section; belongs to the transferase hexapeptide repeat family. In terms of assembly, homotrimer. The cofactor is Mg(2+).

The protein resides in the cytoplasm. It catalyses the reaction alpha-D-glucosamine 1-phosphate + acetyl-CoA = N-acetyl-alpha-D-glucosamine 1-phosphate + CoA + H(+). The enzyme catalyses N-acetyl-alpha-D-glucosamine 1-phosphate + UTP + H(+) = UDP-N-acetyl-alpha-D-glucosamine + diphosphate. The protein operates within nucleotide-sugar biosynthesis; UDP-N-acetyl-alpha-D-glucosamine biosynthesis; N-acetyl-alpha-D-glucosamine 1-phosphate from alpha-D-glucosamine 6-phosphate (route II): step 2/2. It functions in the pathway nucleotide-sugar biosynthesis; UDP-N-acetyl-alpha-D-glucosamine biosynthesis; UDP-N-acetyl-alpha-D-glucosamine from N-acetyl-alpha-D-glucosamine 1-phosphate: step 1/1. Its pathway is bacterial outer membrane biogenesis; LPS lipid A biosynthesis. Functionally, catalyzes the last two sequential reactions in the de novo biosynthetic pathway for UDP-N-acetylglucosamine (UDP-GlcNAc). The C-terminal domain catalyzes the transfer of acetyl group from acetyl coenzyme A to glucosamine-1-phosphate (GlcN-1-P) to produce N-acetylglucosamine-1-phosphate (GlcNAc-1-P), which is converted into UDP-GlcNAc by the transfer of uridine 5-monophosphate (from uridine 5-triphosphate), a reaction catalyzed by the N-terminal domain. The protein is Bifunctional protein GlmU of Salmonella schwarzengrund (strain CVM19633).